Consider the following 254-residue polypeptide: Ribonuclease HII (254 aa).

An RNase H type-2 domain is found at 46–234 (KLIAGIDEVG…VWMASAPQEV (189 aa)). Positions 52, 53, and 144 each coordinate a divalent metal cation.

The protein belongs to the RNase HII family. Mn(2+) serves as cofactor. Requires Mg(2+) as cofactor.

Its subcellular location is the cytoplasm. The catalysed reaction is Endonucleolytic cleavage to 5'-phosphomonoester.. In terms of biological role, endonuclease that specifically degrades the RNA of RNA-DNA hybrids. In Koribacter versatilis (strain Ellin345), this protein is Ribonuclease HII.